The chain runs to 330 residues: 7,8-didemethyl-8-hydroxy-5-deazariboflavin synthase (330 aa).

The Radical SAM core domain occupies 5 to 245; sequence VTFSRNVFIP…SDVAVQVAPN (241 aa). The [4Fe-4S] cluster site is built by C19, C23, and C26.

The protein belongs to the radical SAM superfamily. CofG family. In terms of assembly, consists of two subunits, CofG and CofH. [4Fe-4S] cluster is required as a cofactor.

The catalysed reaction is 5-amino-5-(4-hydroxybenzyl)-6-(D-ribitylimino)-5,6-dihydrouracil + S-adenosyl-L-methionine = 7,8-didemethyl-8-hydroxy-5-deazariboflavin + 5'-deoxyadenosine + L-methionine + NH4(+) + H(+). Its pathway is cofactor biosynthesis; coenzyme F0 biosynthesis. Functionally, catalyzes the radical-mediated synthesis of 7,8-didemethyl-8-hydroxy-5-deazariboflavin from 5-amino-5-(4-hydroxybenzyl)-6-(D-ribitylimino)-5,6-dihydrouracil. The protein is 7,8-didemethyl-8-hydroxy-5-deazariboflavin synthase of Methanococcoides burtonii (strain DSM 6242 / NBRC 107633 / OCM 468 / ACE-M).